The following is a 197-amino-acid chain: Phosphoheptose isomerase (197 aa).

Positions 36–197 (LFAALANNGR…IDALLLGDTE (162 aa)) constitute an SIS domain. 51–53 (NGG) provides a ligand contact to substrate. The Zn(2+) site is built by His-60 and Glu-64. Substrate contacts are provided by residues Glu-64, 93 to 94 (ND), 119 to 121 (STS), Ser-124, and Gln-174. Gln-174 and His-182 together coordinate Zn(2+).

Belongs to the SIS family. GmhA subfamily. As to quaternary structure, homotetramer. It depends on Zn(2+) as a cofactor.

It localises to the cytoplasm. The catalysed reaction is 2 D-sedoheptulose 7-phosphate = D-glycero-alpha-D-manno-heptose 7-phosphate + D-glycero-beta-D-manno-heptose 7-phosphate. It participates in carbohydrate biosynthesis; D-glycero-D-manno-heptose 7-phosphate biosynthesis; D-glycero-alpha-D-manno-heptose 7-phosphate and D-glycero-beta-D-manno-heptose 7-phosphate from sedoheptulose 7-phosphate: step 1/1. In terms of biological role, catalyzes the isomerization of sedoheptulose 7-phosphate in D-glycero-D-manno-heptose 7-phosphate. In Bordetella avium (strain 197N), this protein is Phosphoheptose isomerase.